A 21-amino-acid chain; its full sequence is GVLDIFKDAAKQILAHAAEQI.

I21 is subject to Isoleucine amide.

As to expression, expressed by the skin dorsal glands.

The protein localises to the secreted. Functionally, has hemolytic activity against human erythrocytes and antibacterial activity against the Gram-negative bacterium E.coli. The polypeptide is Ocellatin-2 (Leptodactylus ocellatus (Argus frog)).